The sequence spans 239 residues: Bradykinin-potentiating and C-type natriuretic peptides (239 aa).

Positions 1–23 (MFVSRLAASGLLLLALLAVSLDG) are cleaved as a signal peptide. Propeptides lie at residues 24 to 33 (KPVQQWSHKG) and 43 to 49 (LVVQQWS). The residue at position 50 (Gln-50) is a Pyrrolidone carboxylic acid. Positions 62 to 64 (VVV) are excised as a propeptide. A Pyrrolidone carboxylic acid modification is found at Gln-65. A propeptide spanning residues 76–82 (LVVQQWS) is cleaved from the precursor. Residue Gln-83 is modified to Pyrrolidone carboxylic acid. A propeptide spanning residues 95–97 (LVV) is cleaved from the precursor. A Pyrrolidone carboxylic acid modification is found at Gln-98. 2 consecutive propeptides follow at residues 109–136 (LLKPHESPAGGTTALREELSLGPEAALD) and 148–217 (GSKA…LAKK). The interval 132–205 (EAALDTPPAG…HHAVGGGGGG (74 aa)) is disordered. The span at 161–171 (SKGASATSAAS) shows a compositional bias: low complexity. Residues 173–183 (PMRDLRTDGKQ) are compositionally biased toward basic and acidic residues. Cys-223 and Cys-239 are joined by a disulfide.

In the N-terminal section; belongs to the bradykinin-potentiating peptide family. It in the central section; belongs to the bradykinin inhibitor peptide family. This sequence in the C-terminal section; belongs to the natriuretic peptide family. In terms of tissue distribution, expressed by the venom gland.

Its subcellular location is the secreted. In terms of biological role, bradykinin-potentiating peptides both inhibit the activity of the angiotensin-converting enzyme (ACE) and enhances the action of bradykinin by inhibiting the peptidases that inactivate it. They act as indirect hypotensive agent. Its function is as follows. inhibits angiotensin-converting enzyme (ACE) activity (IC(50)=4.25 uM), preventing the release of angiotensin and thus indirectly contributing to hypotension. In vivo, induce hypotensive response in both normotensive and hypertensive rats. Antagonizes the vasodilatory actions of bradykinin at the B2 bradykinin receptor (BDKRB2). Functionally, has a vasorelaxant activity in rat aortic strips and a diuretic potency in anesthetized rats. May act by activating natriuretic receptors (NPR1 and/or NPR2). The sequence is that of Bradykinin-potentiating and C-type natriuretic peptides from Lachesis muta muta (Bushmaster).